Reading from the N-terminus, the 399-residue chain is Elongation factor Tu (399 aa).

The tr-type G domain occupies 10 to 204 (KPHVNIGTIG…AVDASIPEPE (195 aa)). A G1 region spans residues 19 to 26 (GHVDHGKT). GTP is bound at residue 19-26 (GHVDHGKT). Threonine 26 contacts Mg(2+). Residues 60–64 (GITIN) form a G2 region. Residues 81 to 84 (DCPG) form a G3 region. Residues 81–85 (DCPGH) and 136–139 (NKCD) each bind GTP. The interval 136-139 (NKCD) is G4. A G5 region spans residues 174 to 176 (SGL).

It belongs to the TRAFAC class translation factor GTPase superfamily. Classic translation factor GTPase family. EF-Tu/EF-1A subfamily. In terms of assembly, monomer.

The protein resides in the cytoplasm. The enzyme catalyses GTP + H2O = GDP + phosphate + H(+). Its function is as follows. GTP hydrolase that promotes the GTP-dependent binding of aminoacyl-tRNA to the A-site of ribosomes during protein biosynthesis. The protein is Elongation factor Tu of Prochlorococcus marinus (strain SARG / CCMP1375 / SS120).